A 530-amino-acid chain; its full sequence is Type 2 DNA topoisomerase 6 subunit B (530 aa).

ATP contacts are provided by residues asparagine 42, aspartate 76, 97 to 98, 106 to 113, and lysine 427; these read SK and GMYGLGVK.

It belongs to the TOP6B family. As to quaternary structure, homodimer. Heterotetramer of two Top6A and two Top6B chains.

It catalyses the reaction ATP-dependent breakage, passage and rejoining of double-stranded DNA.. Relaxes both positive and negative superturns and exhibits a strong decatenase activity. This Saccharolobus solfataricus (strain ATCC 35092 / DSM 1617 / JCM 11322 / P2) (Sulfolobus solfataricus) protein is Type 2 DNA topoisomerase 6 subunit B.